An 88-amino-acid chain; its full sequence is Small ribosomal subunit protein bS20 (88 aa).

Disordered regions lie at residues 1-23 (MANSPQARKRARQAENRRQHNAA) and 69-88 (PNKAARHKSRLNTKIKAMAA). The segment covering 69 to 81 (PNKAARHKSRLNT) has biased composition (basic residues).

It belongs to the bacterial ribosomal protein bS20 family.

In terms of biological role, binds directly to 16S ribosomal RNA. The polypeptide is Small ribosomal subunit protein bS20 (Alcanivorax borkumensis (strain ATCC 700651 / DSM 11573 / NCIMB 13689 / SK2)).